The following is a 474-amino-acid chain: Calcium/calmodulin-dependent protein kinase type IV (474 aa).

A phosphoserine; by autocatalysis mark is found at S11 and S12. The Protein kinase domain occupies 42–296 (FEVESELGRG…TFQALQHPWV (255 aa)). Residues 48–56 (LGRGATSIV) and K71 each bind ATP. A glycan (O-linked (GlcNAc) threonine) is linked at T53. S54 is a glycosylation site (O-linked (GlcNAc) serine). A glycan (O-linked (GlcNAc) serine) is linked at S133. The active-site Proton acceptor is the D160. S185 carries an O-linked (GlcNAc) serine glycan. T196 bears the Phosphothreonine; by CaMKK1 and CaMKK2 mark. The interval 297–336 (TGKAANFVHMDTAQKKLQEFNARRKLKAAVKAVVASSRLG) is autoinhibitory domain. The segment at 302 to 319 (NFVHMDTAQKKLQEFNAR) is PP2A-binding. Residues 318–337 (ARRKLKAAVKAVVASSRLGS) form a calmodulin-binding region. A Phosphoserine; by autocatalysis modification is found at S332. Residues 336–474 (GSASSSHTNI…PQQDAILPEY (139 aa)) are disordered. At S337 the chain carries Phosphoserine. O-linked (GlcNAc) serine glycosylation is found at S340, S341, and S352. Polar residues predominate over residues 342–356 (HTNIQESNKASSEAQ). Positions 360-392 (DGKDKTDPLENKMQAGDHEAAKAAADETMKLQS) are enriched in basic and acidic residues. Positions 393-413 (EEVEEEEGVKEEEEEEEEEEE) are enriched in acidic residues. Positions 431 to 454 (QEMKRNSEETLKSVEEEMDPKAEE) are enriched in basic and acidic residues. Phosphoserine is present on residues S437 and S443.

This sequence belongs to the protein kinase superfamily. CAMK Ser/Thr protein kinase family. CaMK subfamily. Monomer. Interacts with protein phosphatase 2A (PPP2CA/PPP2CB); the interaction is mutually exclusive with binding to Ca(2+)/calmodulin. In terms of processing, phosphorylated by CaMKK1 and CaMKK2 on Thr-196. Dephosphorylated by protein phosphatase 2A. Autophosphorylated on Ser-11 and Ser-12. Post-translationally, glycosylation at Ser-185 modulates the phosphorylation of CaMK4 at Thr-196 and negatively regulates its activity toward CREB1 in basal conditions and during early inomycin stimulation. The N-terminus of calspermin is blocked. In terms of tissue distribution, isoform 1 is expressed in brain and isoform 2 is testis specific.

It localises to the cytoplasm. Its subcellular location is the nucleus. The catalysed reaction is L-seryl-[protein] + ATP = O-phospho-L-seryl-[protein] + ADP + H(+). It carries out the reaction L-threonyl-[protein] + ATP = O-phospho-L-threonyl-[protein] + ADP + H(+). Activated by Ca(2+)/calmodulin. Binding of calmodulin results in conformational change that relieves intrasteric autoinhibition and allows phosphorylation of Thr-196 within the activation loop by CaMKK1 or CaMKK2. Phosphorylation of Thr-196 results in a 10-20-fold increase in total activity to generate Ca(2+)/calmodulin-independent activity. Autophosphorylation of the N-terminus Ser-11 and Ser-12 is required for full activation. Inactivated by protein phosphatase 2A (PPP2CA/PPP2CB) which dephosphorylates Thr-196, thereby terminating autonomous activity and helping to maintain the enzyme in its autoinhibited state. Functionally, calcium/calmodulin-dependent protein kinase that operates in the calcium-triggered CaMKK-CaMK4 signaling cascade and regulates, mainly by phosphorylation, the activity of several transcription activators, such as CREB1, MEF2D, JUN and RORA, which play pivotal roles in immune response, inflammation, and memory consolidation. In the thymus, regulates the CD4(+)/CD8(+) double positive thymocytes selection threshold during T-cell ontogeny. In CD4 memory T-cells, is required to link T-cell antigen receptor (TCR) signaling to the production of IL2, IFNG and IL4 (through the regulation of CREB and MEF2). Regulates the differentiation and survival phases of osteoclasts and dendritic cells (DCs). Mediates DCs survival by linking TLR4 and the regulation of temporal expression of BCL2. Phosphorylates the transcription activator CREB1 on 'Ser-133' in hippocampal neuron nuclei and contribute to memory consolidation and long term potentiation (LTP) in the hippocampus. Can activate the MAP kinases MAPK1/ERK2, MAPK8/JNK1 and MAPK14/p38 and stimulate transcription through the phosphorylation of ELK1 and ATF2. Can also phosphorylate in vitro CREBBP, PRM2, MEF2A and STMN1/OP18. In terms of biological role, heat-stable, acidic, calmodulin-binding protein. This is Calcium/calmodulin-dependent protein kinase type IV (Camk4) from Rattus norvegicus (Rat).